Reading from the N-terminus, the 453-residue chain is Plasmepsin II (453 aa).

Residues Met1–Lys37 are Cytoplasmic-facing. Residues Met1–Gly124 constitute a propeptide that is removed on maturation. A helical; Signal-anchor for type II membrane protein transmembrane segment spans residues Gly38–Val58. The Lumenal segment spans residues Tyr59 to Leu453. Residues Phe140–Ala447 enclose the Peptidase A1 domain. Asp158 is a catalytic residue. A disulfide bridge links Cys171 with Cys176. Asp338 is a catalytic residue. Cys373 and Cys409 form a disulfide bridge.

This sequence belongs to the peptidase A1 family. As to quaternary structure, component of the hemozoin formation complex (HFC) composed of falcipains FP2A and/or FP2B, plasmepsins PMII, PMIII/HAP and PMIV, heme detoxifying protein HDP and falcilysin FLN. The HFC complex is involved in hemoglobin degradation and detoxification of heme in the food vacuole during the asexual blood stage. Not N-glycosylated. In terms of processing, proteolytically cleaved into the soluble active mature form in the digestive vacuole by cysteine protease falcipains; the process begins at the early ring stage. Proteolysis requires an acidic environment. In absence of falcipains, autoprocessing may serve as an alternate activation system.

The protein localises to the membrane. It is found in the vacuole lumen. It localises to the vacuole membrane. The enzyme catalyses Hydrolysis of the bonds linking certain hydrophobic residues in hemoglobin or globin. Also cleaves small molecules substrates such as Ala-Leu-Glu-Arg-Thr-Phe-|-Phe(NO2)-Ser-Phe-Pro-Thr.. Its activity is regulated as follows. Inhibited by pepstatin A. Its function is as follows. During the asexual blood stage, participates in initial cleavage of native host hemoglobin (Hb) resulting in Hb denaturation. May cleave preferentially denatured hemoglobin that has been cleaved by PMI. Digestion of host Hb is an essential step which provides the parasite with amino acids for protein synthesis, and regulates osmolarity. The sequence is that of Plasmepsin II from Plasmodium falciparum (isolate HB3).